The primary structure comprises 317 residues: Probable deoxyhypusine synthase 1 (317 aa).

Lys-285 serves as the catalytic Nucleophile.

Belongs to the deoxyhypusine synthase family. NAD(+) is required as a cofactor.

It catalyses the reaction [eIF5A protein]-L-lysine + spermidine = [eIF5A protein]-deoxyhypusine + propane-1,3-diamine. It functions in the pathway protein modification; eIF5A hypusination. Functionally, catalyzes the NAD-dependent oxidative cleavage of spermidine and the subsequent transfer of the butylamine moiety of spermidine to the epsilon-amino group of a specific lysine residue of the eIF-5A precursor protein to form the intermediate deoxyhypusine residue. The chain is Probable deoxyhypusine synthase 1 (dys1) from Methanosarcina mazei (strain ATCC BAA-159 / DSM 3647 / Goe1 / Go1 / JCM 11833 / OCM 88) (Methanosarcina frisia).